The following is a 246-amino-acid chain: 5'-nucleotidase SurE (246 aa).

The a divalent metal cation site is built by D8, D9, S39, and N91.

This sequence belongs to the SurE nucleotidase family. It depends on a divalent metal cation as a cofactor.

It localises to the cytoplasm. The catalysed reaction is a ribonucleoside 5'-phosphate + H2O = a ribonucleoside + phosphate. Nucleotidase that shows phosphatase activity on nucleoside 5'-monophosphates. In Histophilus somni (strain 129Pt) (Haemophilus somnus), this protein is 5'-nucleotidase SurE.